We begin with the raw amino-acid sequence, 254 residues long: 7-cyano-7-deazaguanine synthase (254 aa).

30 to 40 (YSGGQDSATCL) is an ATP binding site. Zn(2+)-binding residues include Cys-218, Cys-233, Cys-236, and Cys-239.

This sequence belongs to the QueC family. The cofactor is Zn(2+).

The enzyme catalyses 7-carboxy-7-deazaguanine + NH4(+) + ATP = 7-cyano-7-deazaguanine + ADP + phosphate + H2O + H(+). The protein operates within purine metabolism; 7-cyano-7-deazaguanine biosynthesis. Its function is as follows. Catalyzes the ATP-dependent conversion of 7-carboxy-7-deazaguanine (CDG) to 7-cyano-7-deazaguanine (preQ(0)). This chain is 7-cyano-7-deazaguanine synthase, found in Zymomonas mobilis subsp. mobilis (strain ATCC 31821 / ZM4 / CP4).